The sequence spans 912 residues: Phosphatidylinositol-3-phosphatase SAC1 (912 aa).

The interval 1–29 is disordered; sequence MAKSENSTTSTFSSFANKIQPSNDAESDP. Positions 173–575 constitute an SAC domain; that stretch reads LSSVDLTKDF…GDALAQQYGG (403 aa). Positions 511-522 match the Phosphatase catalytic core motif; that stretch reads RTNCIDCLDRTN. A required for subcellular localization region spans residues 715–912; sequence RPGGNTGSTG…VGDDKVPKVI (198 aa). The segment at 740–766 is disordered; that stretch reads LFGSRKPEESSSATKSGADDSEKGVTS.

Component of the PI(3,5)P2 regulatory complex at least composed of ATG18, SAC/FIG4, FAB1 and VAC14. Mg(2+) is required as a cofactor. Ubiquitous with higher expression level in both young elongating and nonelongating stems. Detected in vascular tissues.

It localises to the vacuole membrane. The protein localises to the golgi apparatus. The catalysed reaction is a 1,2-diacyl-sn-glycero-3-phospho-(1D-myo-inositol-3-phosphate) + H2O = a 1,2-diacyl-sn-glycero-3-phospho-(1D-myo-inositol) + phosphate. It catalyses the reaction a 1,2-diacyl-sn-glycero-3-phospho-(1D-myo-inositol-3,5-bisphosphate) + H2O = a 1,2-diacyl-sn-glycero-3-phospho-(1D-myo-inositol-3-phosphate) + phosphate. The enzyme catalyses a 1,2-diacyl-sn-glycero-3-phospho-(1D-myo-inositol 4-phosphate) + H2O = a 1,2-diacyl-sn-glycero-3-phospho-(1D-myo-inositol) + phosphate. Its function is as follows. Phosphoinositide phosphatase which catalyzes the hydrolysis of phosphatidylinositol-3,5-bisphosphate (PtdIns(3,5)P2). Can also catalyze the hydrolysis of phosphatidylinositol 3-phosphate (PtdIns(3)P) and phosphatidylinositol 4-phosphate (PtdIns(4)P). Required for normal cell morphogenesis, cell wall synthesis, and actin organization. This chain is Phosphatidylinositol-3-phosphatase SAC1 (SAC1), found in Arabidopsis thaliana (Mouse-ear cress).